The sequence spans 634 residues: Probable potassium transport system protein Kup (634 aa).

The next 12 membrane-spanning stretches (helical) occupy residues 19–39 (AIGL…TSPL), 62–82 (VLSL…VIFV), 113–133 (FVVV…MITP), 150–170 (GLEH…FLIQ), 177–197 (IGIL…ALGV), 225–245 (IGVA…ALYA), 259–279 (WFLL…ATIL), 291–311 (LLAP…ATVI), 349–369 (IYIG…VLGF), 379–399 (YGVA…VVIW), 406–426 (LWLG…FFAA), and 431–451 (VIQG…LMST).

It belongs to the HAK/KUP transporter (TC 2.A.72) family.

It localises to the cell inner membrane. The enzyme catalyses K(+)(in) + H(+)(in) = K(+)(out) + H(+)(out). Transport of potassium into the cell. Likely operates as a K(+):H(+) symporter. This chain is Probable potassium transport system protein Kup, found in Pseudomonas aeruginosa (strain UCBPP-PA14).